A 288-amino-acid chain; its full sequence is Phosphatidate cytidylyltransferase (288 aa).

The next 7 helical transmembrane spans lie at 10 to 30, 52 to 72, 89 to 109, 118 to 138, 152 to 172, 192 to 212, and 223 to 243; these read IVLI…YFAL, PLIR…WLYT, LLLI…ISYP, NPLL…AGVL, GLFL…GAYF, WEGV…FIHF, and ITGF…GDLT.

It belongs to the CDS family.

Its subcellular location is the cell inner membrane. The catalysed reaction is a 1,2-diacyl-sn-glycero-3-phosphate + CTP + H(+) = a CDP-1,2-diacyl-sn-glycerol + diphosphate. It functions in the pathway phospholipid metabolism; CDP-diacylglycerol biosynthesis; CDP-diacylglycerol from sn-glycerol 3-phosphate: step 3/3. In Haemophilus influenzae (strain ATCC 51907 / DSM 11121 / KW20 / Rd), this protein is Phosphatidate cytidylyltransferase (cdsA).